A 209-amino-acid chain; its full sequence is Probable glutathione peroxidase 8 (209 aa).

N-acetylmethionine is present on methionine 1. The chain crosses the membrane as a helical span at residues valine 18 to leucine 40. Cysteine 79 is a catalytic residue.

The protein belongs to the glutathione peroxidase family.

The protein localises to the membrane. It carries out the reaction 2 glutathione + H2O2 = glutathione disulfide + 2 H2O. The sequence is that of Probable glutathione peroxidase 8 (GPX8) from Homo sapiens (Human).